The sequence spans 208 residues: Putative dioxygenase RF_0617 (208 aa).

Belongs to the intradiol ring-cleavage dioxygenase family.

In Rickettsia felis (strain ATCC VR-1525 / URRWXCal2) (Rickettsia azadi), this protein is Putative dioxygenase RF_0617.